The primary structure comprises 293 residues: Nucleotide-binding protein Dole_0503 (293 aa).

ATP is bound at residue 11–18 (GLSGSGKS). 62–65 (DLRE) is a GTP binding site.

This sequence belongs to the RapZ-like family.

Displays ATPase and GTPase activities. This is Nucleotide-binding protein Dole_0503 from Desulfosudis oleivorans (strain DSM 6200 / JCM 39069 / Hxd3) (Desulfococcus oleovorans).